The sequence spans 81 residues: Photosystem I iron-sulfur center (81 aa).

4Fe-4S ferredoxin-type domains lie at 2–31 and 39–68; these read SHFV…MIPW and IASA…VRVY. Residues Cys-11, Cys-14, Cys-17, Cys-21, Cys-48, Cys-51, Cys-54, and Cys-58 each coordinate [4Fe-4S] cluster.

As to quaternary structure, the eukaryotic PSI reaction center is composed of at least 11 subunits. Requires [4Fe-4S] cluster as cofactor.

The protein resides in the plastid thylakoid membrane. It catalyses the reaction reduced [plastocyanin] + hnu + oxidized [2Fe-2S]-[ferredoxin] = oxidized [plastocyanin] + reduced [2Fe-2S]-[ferredoxin]. Its function is as follows. Apoprotein for the two 4Fe-4S centers FA and FB of photosystem I (PSI); essential for photochemical activity. FB is the terminal electron acceptor of PSI, donating electrons to ferredoxin. The C-terminus interacts with PsaA/B/D and helps assemble the protein into the PSI complex. Required for binding of PsaD and PsaE to PSI. PSI is a plastocyanin-ferredoxin oxidoreductase, converting photonic excitation into a charge separation, which transfers an electron from the donor P700 chlorophyll pair to the spectroscopically characterized acceptors A0, A1, FX, FA and FB in turn. The polypeptide is Photosystem I iron-sulfur center (Cuscuta exaltata (Tall dodder)).